We begin with the raw amino-acid sequence, 138 residues long: ATP synthase epsilon chain (138 aa).

It belongs to the ATPase epsilon chain family. In terms of assembly, F-type ATPases have 2 components, CF(1) - the catalytic core - and CF(0) - the membrane proton channel. CF(1) has five subunits: alpha(3), beta(3), gamma(1), delta(1), epsilon(1). CF(0) has three main subunits: a, b and c.

It localises to the cell membrane. Its function is as follows. Produces ATP from ADP in the presence of a proton gradient across the membrane. In Streptococcus pyogenes serotype M2 (strain MGAS10270), this protein is ATP synthase epsilon chain.